The sequence spans 177 residues: Bifunctional protein PyrR (177 aa).

Positions 97–109 (IILVDDVLYTGRT) match the PRPP-binding motif.

It belongs to the purine/pyrimidine phosphoribosyltransferase family. PyrR subfamily.

It catalyses the reaction UMP + diphosphate = 5-phospho-alpha-D-ribose 1-diphosphate + uracil. Its function is as follows. Regulates the transcription of the pyrimidine nucleotide (pyr) operon in response to exogenous pyrimidines. In terms of biological role, also displays a weak uracil phosphoribosyltransferase activity which is not physiologically significant. This chain is Bifunctional protein PyrR, found in Nitrosococcus oceani (strain ATCC 19707 / BCRC 17464 / JCM 30415 / NCIMB 11848 / C-107).